A 144-amino-acid chain; its full sequence is MLVPKRVKHRREFRGKMRGAAKGGKEVTFGEFGLQALESSWITNRQIEAARVAMTRYMKRGGKVWIKIFPHKSYTAKGVGVRMGSGKGAPAGWVAVVKREKIMFEIGGVSEEVAREALRLASHKLPVKTKIVKREEVGGESNEG.

This sequence belongs to the universal ribosomal protein uL16 family. Part of the 50S ribosomal subunit.

Functionally, binds 23S rRNA and is also seen to make contacts with the A and possibly P site tRNAs. In Latilactobacillus sakei subsp. sakei (strain 23K) (Lactobacillus sakei subsp. sakei), this protein is Large ribosomal subunit protein uL16.